The following is a 61-amino-acid chain: Small ribosomal subunit protein uS14B (61 aa).

Cys-24, Cys-27, Cys-40, and Cys-43 together coordinate Zn(2+).

The protein belongs to the universal ribosomal protein uS14 family. Zinc-binding uS14 subfamily. As to quaternary structure, part of the 30S ribosomal subunit. Contacts proteins S3 and S10. The cofactor is Zn(2+).

Functionally, binds 16S rRNA, required for the assembly of 30S particles and may also be responsible for determining the conformation of the 16S rRNA at the A site. The chain is Small ribosomal subunit protein uS14B from Lactiplantibacillus plantarum (strain ATCC BAA-793 / NCIMB 8826 / WCFS1) (Lactobacillus plantarum).